The following is a 269-amino-acid chain: Thiazole synthase (269 aa).

Lys-95 acts as the Schiff-base intermediate with DXP in catalysis. Residues Gly-156, 182-183, and 204-205 contribute to the 1-deoxy-D-xylulose 5-phosphate site; these read AG and NT.

This sequence belongs to the ThiG family. As to quaternary structure, homotetramer. Forms heterodimers with either ThiH or ThiS.

It is found in the cytoplasm. It carries out the reaction [ThiS sulfur-carrier protein]-C-terminal-Gly-aminoethanethioate + 2-iminoacetate + 1-deoxy-D-xylulose 5-phosphate = [ThiS sulfur-carrier protein]-C-terminal Gly-Gly + 2-[(2R,5Z)-2-carboxy-4-methylthiazol-5(2H)-ylidene]ethyl phosphate + 2 H2O + H(+). It participates in cofactor biosynthesis; thiamine diphosphate biosynthesis. Catalyzes the rearrangement of 1-deoxy-D-xylulose 5-phosphate (DXP) to produce the thiazole phosphate moiety of thiamine. Sulfur is provided by the thiocarboxylate moiety of the carrier protein ThiS. In vitro, sulfur can be provided by H(2)S. The protein is Thiazole synthase of Shewanella frigidimarina (strain NCIMB 400).